The primary structure comprises 503 residues: Aromatase (503 aa).

Residues aspartate 309 and methionine 374 each coordinate substrate. Heme is bound at residue cysteine 437.

Belongs to the cytochrome P450 family. Requires heme as cofactor.

The protein resides in the membrane. It carries out the reaction testosterone + 3 reduced [NADPH--hemoprotein reductase] + 3 O2 = 17beta-estradiol + formate + 3 oxidized [NADPH--hemoprotein reductase] + 4 H2O + 4 H(+). The catalysed reaction is androst-4-ene-3,17-dione + 3 reduced [NADPH--hemoprotein reductase] + 3 O2 = estrone + formate + 3 oxidized [NADPH--hemoprotein reductase] + 4 H2O + 4 H(+). Catalyzes the formation of aromatic C18 estrogens from C19 androgens. The polypeptide is Aromatase (CYP19A1) (Callithrix jacchus (White-tufted-ear marmoset)).